The chain runs to 640 residues: uncharacterized protein (640 aa).

The next 14 membrane-spanning stretches (helical) occupy residues 8-28 (GGVV…LGMF), 52-72 (LGGF…CYLI), 90-110 (LFVA…FLLA), 136-156 (LWYA…LVVL), 179-199 (VFML…LHAW), 208-228 (PSPV…YGIV), 241-261 (WWGL…VLQA), 277-297 (ENMG…DTGA), 298-318 (YGPA…HAAF), 352-372 (TVFF…AGFV), 391-411 (IVAL…GLSV), 446-466 (AIAA…APMV), 497-517 (IAPG…AVLA), and 619-639 (GSVH…LVVA).

This sequence belongs to the complex I subunit 4 family.

It localises to the cell membrane. This is an uncharacterized protein from Mycobacterium tuberculosis (strain CDC 1551 / Oshkosh).